The primary structure comprises 301 residues: GTP cyclohydrolase FolE2 (301 aa).

The protein belongs to the GTP cyclohydrolase IV family.

It carries out the reaction GTP + H2O = 7,8-dihydroneopterin 3'-triphosphate + formate + H(+). It participates in cofactor biosynthesis; 7,8-dihydroneopterin triphosphate biosynthesis; 7,8-dihydroneopterin triphosphate from GTP: step 1/1. In terms of biological role, converts GTP to 7,8-dihydroneopterin triphosphate. This Pseudomonas savastanoi pv. phaseolicola (strain 1448A / Race 6) (Pseudomonas syringae pv. phaseolicola (strain 1448A / Race 6)) protein is GTP cyclohydrolase FolE2.